A 106-amino-acid chain; its full sequence is Large ribosomal subunit protein uL24 (106 aa).

Belongs to the universal ribosomal protein uL24 family. Part of the 50S ribosomal subunit.

Its function is as follows. One of two assembly initiator proteins, it binds directly to the 5'-end of the 23S rRNA, where it nucleates assembly of the 50S subunit. Functionally, one of the proteins that surrounds the polypeptide exit tunnel on the outside of the subunit. This chain is Large ribosomal subunit protein uL24, found in Parabacteroides distasonis (strain ATCC 8503 / DSM 20701 / CIP 104284 / JCM 5825 / NCTC 11152).